Reading from the N-terminus, the 1042-residue chain is Disintegrin and metalloproteinase domain-containing protein unc-71 (1042 aa).

The N-terminal stretch at 1-23 (MICASKITMLGLLVMCTLGGVLG) is a signal peptide. Over 24–746 (KVDIRQTTAN…NIGTTLETAT (723 aa)) the chain is Extracellular. N-linked (GlcNAc...) asparagine glycosylation is found at asparagine 103 and asparagine 155. One can recognise a Peptidase M12B domain in the interval 227-431 (KYVEVALIAD…GNIQCLLNKP (205 aa)). 4 cysteine pairs are disulfide-bonded: cysteine 338–cysteine 426, cysteine 378–cysteine 410, cysteine 380–cysteine 386, and cysteine 496–cysteine 516. A Disintegrin domain is found at 437 to 524 (LRECGNGVVD…DCPPDGHLID (88 aa)). Asparagine 538 carries N-linked (GlcNAc...) asparagine glycosylation. The EGF-like domain maps to 662 to 699 (SATACPTNNLALLCSGHGHCTTTARCVCFNGWSGVACD). 3 disulfide bridges follow: cysteine 666-cysteine 681, cysteine 675-cysteine 687, and cysteine 689-cysteine 698. Asparagine 703 carries N-linked (GlcNAc...) asparagine glycosylation. Residues 747 to 767 (LFAILLGFGVFLLLCLVCLML) traverse the membrane as a helical segment. At 768-1042 (CYRRRSVVEI…KLEMTNSMHN (275 aa)) the chain is on the cytoplasmic side. Disordered regions lie at residues 779 to 809 (KPSD…RKRK), 825 to 850 (DERD…RRNG), and 980 to 1028 (HDVG…PSLF). Residues 825–836 (DERDSTSLRSRD) show a composition bias toward basic and acidic residues. A compositionally biased stretch (polar residues) spans 1002–1027 (DSPTLVNGASSSSTSNNYNFRQSPSL).

Its subcellular location is the cell membrane. Functionally, involved in the migration of sex myoblasts (progenitors of egg-laying muscles), Q neuroblasts and BDU interneurons during development. Involved in axon branching and guidance of neurons including GABAergic type D motor neurons. Promotes sex myoblast migration and positioning independently of gonad attraction cues. May act downstream of mig-13 in order to promote the guidance, migration and positioning of Q neuroblasts and their descendants along the anteroposterior body axis. Required for coordinated movements. The polypeptide is Disintegrin and metalloproteinase domain-containing protein unc-71 (Caenorhabditis elegans).